Reading from the N-terminus, the 339-residue chain is Uroporphyrinogen decarboxylase (339 aa).

Substrate is bound by residues 23-27 (RQAGR), Asp72, Tyr147, Thr202, and His315.

This sequence belongs to the uroporphyrinogen decarboxylase family. In terms of assembly, homodimer.

It localises to the cytoplasm. The enzyme catalyses uroporphyrinogen III + 4 H(+) = coproporphyrinogen III + 4 CO2. It participates in porphyrin-containing compound metabolism; protoporphyrin-IX biosynthesis; coproporphyrinogen-III from 5-aminolevulinate: step 4/4. Functionally, catalyzes the decarboxylation of four acetate groups of uroporphyrinogen-III to yield coproporphyrinogen-III. This Geotalea daltonii (strain DSM 22248 / JCM 15807 / FRC-32) (Geobacter daltonii) protein is Uroporphyrinogen decarboxylase.